The chain runs to 250 residues: MKRSYQALEPTLFFLMLMVIWEISARMIGQPYLLPSPIQIVMRTIDLSESLFFTHLPATLAIISIGLALSIVLGILLSLLMFWNERVERAVYPLLVASQTIPVIALAPIFVLWFGYSIWSKVAVTVLLTFFPITVNTYDGLKSTNRQYEELFYTMGATKRQLFYRLFVPSTLPSFLTGLRIAVPLAVIGAAVGEWLGANEGLGYFSRRMMTQFDGPGVFAPIFILSLLGILGFAAIKKLENILLPWRKKQ.

6 consecutive transmembrane segments (helical) span residues 5 to 25, 62 to 82, 94 to 114, 115 to 135, 172 to 192, and 216 to 236; these read YQALEPTLFFLMLMVIWEISA, IISIGLALSIVLGILLSLLMF, LLVASQTIPVIALAPIFVLWF, GYSIWSKVAVTVLLTFFPITV, LPSFLTGLRIAVPLAVIGAAV, and PGVFAPIFILSLLGILGFAAI. In terms of domain architecture, ABC transmembrane type-1 spans 56 to 237; it reads LPATLAIISI…LGILGFAAIK (182 aa).

The protein belongs to the binding-protein-dependent transport system permease family. In terms of assembly, the complex is likely composed of an ATP-binding protein (ThiZ), a transmembrane protein (ThiX) and a solute-binding protein (ThiY).

Its subcellular location is the cell membrane. Its pathway is cofactor biosynthesis; thiamine diphosphate biosynthesis. Functionally, participates in a thiamine pyrimidine salvage pathway as part of the ABC transporter complex ThiXYZ involved in the import of thiamine degradation products such as the formylaminopyrimidine N-formyl-4-amino-5-aminomethyl-2-methylpyrimidine (FAMP). Is probably responsible for the translocation of the substrate across the membrane. This is Formylaminopyrimidine transport permease protein ThiX from Halalkalibacterium halodurans (strain ATCC BAA-125 / DSM 18197 / FERM 7344 / JCM 9153 / C-125) (Bacillus halodurans).